The primary structure comprises 325 residues: Natural cytotoxicity triggering receptor 1 (325 aa).

The signal sequence occupies residues 1-16; the sequence is MLPTLTALLCLGLCLS. Residues 17-255 are Extracellular-facing; it reads QRINTEKETL…SAFWDHTTQN (239 aa). 2 consecutive Ig-like domains span residues 34 to 118 and 129 to 211; these read KPSI…LVVT and YPRP…LLIT. The cysteines at positions 49 and 98 are disulfide-linked. N139 is a glycosylation site (N-linked (GlcNAc...) asparagine). A disulfide bridge links C144 with C190. N-linked (GlcNAc...) asparagine glycosylation is found at N216 and N238. Residues 256-273 traverse the membrane as a helical segment; that stretch reads LIRIGLACIILITLVWLL. Over 274-325 the chain is Cytoplasmic; the sequence is TEDWLSKRKDHEEANRLTNWECRRRWRMQHYFEEEQRNAISMMELKATPGAL.

Belongs to the natural cytotoxicity receptor (NCR) family. As to quaternary structure, interacts with CD3Z and FCER1G. As to expression, selectively expressed by NK cells.

The protein resides in the cell membrane. Its function is as follows. Cytotoxicity-activating receptor that may contribute to the increased efficiency of activated natural killer (NK) cells to mediate tumor cell lysis. This is Natural cytotoxicity triggering receptor 1 (Ncr1) from Mus musculus (Mouse).